Consider the following 785-residue polypeptide: Phenylalanine--tRNA ligase beta subunit (785 aa).

In terms of domain architecture, tRNA-binding spans 38–150; the sequence is CEHLKTFVIA…NTYNVGDTFF (113 aa). Residues 394-470 enclose the B5 domain; it reads VDNIELNFFP…RLYGYDKICE (77 aa). Positions 448, 454, 457, and 458 each coordinate Mg(2+). Residues 690 to 783 enclose the FDX-ACB domain; that stretch reads SCYQSVKRDF…VAEKLGGVLR (94 aa).

This sequence belongs to the phenylalanyl-tRNA synthetase beta subunit family. Type 1 subfamily. In terms of assembly, tetramer of two alpha and two beta subunits. Requires Mg(2+) as cofactor.

Its subcellular location is the cytoplasm. It carries out the reaction tRNA(Phe) + L-phenylalanine + ATP = L-phenylalanyl-tRNA(Phe) + AMP + diphosphate + H(+). This Ehrlichia canis (strain Jake) protein is Phenylalanine--tRNA ligase beta subunit.